The sequence spans 650 residues: Acetyl-coenzyme A synthetase (650 aa).

CoA-binding positions include 191–194 (RGGR), T311, and N335. ATP-binding positions include 387-389 (GEP), 411-416 (DTWWQT), D500, and R515. S523 contributes to the CoA binding site. R526 lines the ATP pocket. 3 residues coordinate Mg(2+): V537, H539, and V542. CoA is bound at residue R584. At K609 the chain carries N6-acetyllysine.

The protein belongs to the ATP-dependent AMP-binding enzyme family. It depends on Mg(2+) as a cofactor. Acetylated. Deacetylation by the SIR2-homolog deacetylase activates the enzyme.

It carries out the reaction acetate + ATP + CoA = acetyl-CoA + AMP + diphosphate. Catalyzes the conversion of acetate into acetyl-CoA (AcCoA), an essential intermediate at the junction of anabolic and catabolic pathways. AcsA undergoes a two-step reaction. In the first half reaction, AcsA combines acetate with ATP to form acetyl-adenylate (AcAMP) intermediate. In the second half reaction, it can then transfer the acetyl group from AcAMP to the sulfhydryl group of CoA, forming the product AcCoA. This Shewanella sp. (strain MR-4) protein is Acetyl-coenzyme A synthetase.